A 177-amino-acid polypeptide reads, in one-letter code: Inorganic pyrophosphatase (177 aa).

Substrate is bound by residues Lys31, Arg45, and Tyr57. Mg(2+) contacts are provided by Asp67, Asp72, and Asp104. A substrate-binding site is contributed by Tyr142.

This sequence belongs to the PPase family. In terms of assembly, homohexamer. Mg(2+) is required as a cofactor.

It is found in the cytoplasm. The catalysed reaction is diphosphate + H2O = 2 phosphate + H(+). Catalyzes the hydrolysis of inorganic pyrophosphate (PPi) forming two phosphate ions. The protein is Inorganic pyrophosphatase of Neisseria meningitidis serogroup A / serotype 4A (strain DSM 15465 / Z2491).